The chain runs to 135 residues: Thioredoxin H5 (135 aa).

In terms of domain architecture, Thioredoxin spans 13-128 (EHLDYSGGNV…LQEKFEQLNR (116 aa)). Catalysis depends on nucleophile residues Cys-54 and Cys-57. A disulfide bridge links Cys-54 with Cys-57.

Belongs to the thioredoxin family. Plant H-type subfamily.

It localises to the cytoplasm. Functionally, probable thiol-disulfide oxidoreductase that may be involved in the redox regulation of a number of cytosolic enzymes. The sequence is that of Thioredoxin H5 from Oryza sativa subsp. japonica (Rice).